The chain runs to 220 residues: Ribosomal RNA small subunit methyltransferase G (220 aa).

Residues glycine 78, phenylalanine 83, 129–130, and arginine 146 each bind S-adenosyl-L-methionine; that span reads GE.

Belongs to the methyltransferase superfamily. RNA methyltransferase RsmG family.

It localises to the cytoplasm. It carries out the reaction guanosine(527) in 16S rRNA + S-adenosyl-L-methionine = N(7)-methylguanosine(527) in 16S rRNA + S-adenosyl-L-homocysteine. Functionally, specifically methylates the N7 position of guanine in position 527 of 16S rRNA. This Geobacter metallireducens (strain ATCC 53774 / DSM 7210 / GS-15) protein is Ribosomal RNA small subunit methyltransferase G.